The primary structure comprises 508 residues: Maturase K (508 aa).

The protein belongs to the intron maturase 2 family. MatK subfamily.

The protein resides in the plastid. It localises to the chloroplast. In terms of biological role, usually encoded in the trnK tRNA gene intron. Probably assists in splicing its own and other chloroplast group II introns. This Ranunculus lingua (Greater spearwort) protein is Maturase K.